A 91-amino-acid chain; its full sequence is Small ribosomal subunit protein uS19 (91 aa).

It belongs to the universal ribosomal protein uS19 family.

Functionally, protein S19 forms a complex with S13 that binds strongly to the 16S ribosomal RNA. In Saccharophagus degradans (strain 2-40 / ATCC 43961 / DSM 17024), this protein is Small ribosomal subunit protein uS19.